The primary structure comprises 272 residues: 3-methyl-2-oxobutanoate hydroxymethyltransferase (272 aa).

2 residues coordinate Mg(2+): D43 and D82. Residues 43-44 (DS), D82, and K112 contribute to the 3-methyl-2-oxobutanoate site. Residue E114 participates in Mg(2+) binding. The active-site Proton acceptor is the E179.

It belongs to the PanB family. As to quaternary structure, homodecamer; pentamer of dimers. Mg(2+) serves as cofactor.

It localises to the cytoplasm. The catalysed reaction is 3-methyl-2-oxobutanoate + (6R)-5,10-methylene-5,6,7,8-tetrahydrofolate + H2O = 2-dehydropantoate + (6S)-5,6,7,8-tetrahydrofolate. It functions in the pathway cofactor biosynthesis; (R)-pantothenate biosynthesis; (R)-pantoate from 3-methyl-2-oxobutanoate: step 1/2. Functionally, catalyzes the reversible reaction in which hydroxymethyl group from 5,10-methylenetetrahydrofolate is transferred onto alpha-ketoisovalerate to form ketopantoate. This is 3-methyl-2-oxobutanoate hydroxymethyltransferase from Staphylococcus aureus (strain Newman).